The chain runs to 101 residues: Small ribosomal subunit protein cS23 (101 aa).

Belongs to the chloroplast-specific ribosomal protein cS23 family. As to quaternary structure, part of the 30S ribosomal subunit.

It localises to the plastid. It is found in the chloroplast. Functionally, probably a ribosomal protein or a ribosome-associated protein. The polypeptide is Small ribosomal subunit protein cS23 (ycf65) (Euglena stellata).